We begin with the raw amino-acid sequence, 599 residues long: Elongation factor 4 (599 aa).

The region spanning 2–184 (KNIRNFSIIA…RLVRDIPPPE (183 aa)) is the tr-type G domain. GTP-binding positions include 14-19 (DHGKST) and 131-134 (NKID).

This sequence belongs to the TRAFAC class translation factor GTPase superfamily. Classic translation factor GTPase family. LepA subfamily.

It localises to the cell inner membrane. It carries out the reaction GTP + H2O = GDP + phosphate + H(+). Its function is as follows. Required for accurate and efficient protein synthesis under certain stress conditions. May act as a fidelity factor of the translation reaction, by catalyzing a one-codon backward translocation of tRNAs on improperly translocated ribosomes. Back-translocation proceeds from a post-translocation (POST) complex to a pre-translocation (PRE) complex, thus giving elongation factor G a second chance to translocate the tRNAs correctly. Binds to ribosomes in a GTP-dependent manner. The chain is Elongation factor 4 from Cronobacter sakazakii (strain ATCC BAA-894) (Enterobacter sakazakii).